Here is a 308-residue protein sequence, read N- to C-terminus: Ribosomal RNA large subunit methyltransferase F (308 aa).

This sequence belongs to the methyltransferase superfamily. METTL16/RlmF family.

It localises to the cytoplasm. It catalyses the reaction adenosine(1618) in 23S rRNA + S-adenosyl-L-methionine = N(6)-methyladenosine(1618) in 23S rRNA + S-adenosyl-L-homocysteine + H(+). Specifically methylates the adenine in position 1618 of 23S rRNA. In Escherichia coli (strain SMS-3-5 / SECEC), this protein is Ribosomal RNA large subunit methyltransferase F.